We begin with the raw amino-acid sequence, 68 residues long: UPF0435 protein SAOUHSC_02093 (68 aa).

This sequence belongs to the UPF0435 family.

This is UPF0435 protein SAOUHSC_02093 from Staphylococcus aureus (strain NCTC 8325 / PS 47).